Here is a 417-residue protein sequence, read N- to C-terminus: Biofilm dispersion protein BdlA (417 aa).

The 66-residue stretch at Met-1–Gly-66 folds into the PAS 1 domain. One can recognise a PAC 1 domain in the interval Glu-67–His-114. The 74-residue stretch at Gln-115–Gly-188 folds into the PAS 2 domain. The region spanning Val-191–Glu-241 is the PAC 2 domain. The Methyl-accepting transducer domain maps to Ala-242–Leu-417.

Functionally, essential for biofilm dispersion by sensing environmental cues. May be involved in sensing and transducing signals within cells, resulting in the modulation of c-di-GMP levels, swimming motility and adhesiveness of the bacterial cell surface. The polypeptide is Biofilm dispersion protein BdlA (bdlA) (Pseudomonas aeruginosa (strain ATCC 15692 / DSM 22644 / CIP 104116 / JCM 14847 / LMG 12228 / 1C / PRS 101 / PAO1)).